The following is a 941-amino-acid chain: Translation initiation factor IF-2 (941 aa).

2 disordered regions span residues 61–204 (IQSN…RREN) and 249–274 (QEKD…KNNK). The span at 147–163 (EKAKQKLQEIQKSREAL) shows a compositional bias: basic and acidic residues. The span at 164-179 (NKLTQSNTNNANNANS) shows a compositional bias: low complexity. The span at 180–204 (AKKEISEVAKQEREQEHLDNKRREN) shows a compositional bias: basic and acidic residues. Positions 440–609 (ERPPVVTIMG…LIQADIMELK (170 aa)) constitute a tr-type G domain. The G1 stretch occupies residues 449 to 456 (GHVDHGKT). A GTP-binding site is contributed by 449 to 456 (GHVDHGKT). The G2 stretch occupies residues 474 to 478 (GITQH). Residues 495-498 (DTPG) form a G3 region. GTP is bound by residues 495-499 (DTPGH) and 549-552 (NKMD). Positions 549–552 (NKMD) are G4. The interval 585-587 (SAK) is G5.

It belongs to the TRAFAC class translation factor GTPase superfamily. Classic translation factor GTPase family. IF-2 subfamily.

It localises to the cytoplasm. One of the essential components for the initiation of protein synthesis. Protects formylmethionyl-tRNA from spontaneous hydrolysis and promotes its binding to the 30S ribosomal subunits. Also involved in the hydrolysis of GTP during the formation of the 70S ribosomal complex. The polypeptide is Translation initiation factor IF-2 (Helicobacter acinonychis (strain Sheeba)).